Here is a 603-residue protein sequence, read N- to C-terminus: Palladin (603 aa).

Positions 63–67 are interaction with VASP; the sequence is FPPPP. Position 133 is a phosphoserine (S133). The tract at residues 134–156 is disordered; that stretch reads PPTPAALLSPTKEPPPLLAKPKL. T136 bears the Phosphothreonine mark. A phosphoserine mark is found at S142, S170, S256, and S261. The Ig-like C2-type 1 domain maps to 278–362; it reads PFFEMKLKHY…MAANTQGRVS (85 aa). The interval 373–402 is disordered; it reads NQRGRSPRSPPGHPHARRPRSRSRDSGDEN. Residues S378, S381, and S393 each carry the phosphoserine modification. At S395 the chain carries Phosphoserine; by PKB/AKT1. At S398 the chain carries Phosphoserine. 2 consecutive Ig-like C2-type domains span residues 412–503 and 511–601; these read PHFL…LVVA and PVFI…ARLD. 2 interaction with EZR regions span residues 414–503 and 513–603; these read FLQA…LVVA and FIEK…LDVY. C433 and C485 are oxidised to a cystine.

Belongs to the myotilin/palladin family. In terms of assembly, interacts with EPS8. Interacts with LASP1. Interacts with VASP. Interacts with ACTN. Interacts with SORBS2. Interacts with PFN1. Interacts with LPP. Interacts with SPIN90. Interacts with SRC. Interacts with EZR. Interacts with RAI14. In terms of processing, phosphorylated predominantly on serines and, to a lesser extent, on tyrosines. Phosphorylation at Ser-395 by PKB/AKT1 modulates cytoskeletal organization and cell motility. In adult central nervous system is detected in the brain and spinal cord, specially in the olfactory bulb, cerebral and cerebellar cortices, hippocampus, amygdala, superior colluculus, and superficial laminae of the spinal dorsal horn.

The protein localises to the cytoplasm. It localises to the cytoskeleton. The protein resides in the cell junction. Its subcellular location is the focal adhesion. It is found in the myofibril. The protein localises to the sarcomere. It localises to the z line. The protein resides in the cell projection. Its subcellular location is the ruffle. It is found in the podosome. The protein localises to the lamellipodium. It localises to the axon. The protein resides in the growth cone. Its function is as follows. Cytoskeletal protein required for organization of normal actin cytoskeleton. Roles in establishing cell morphology, motility, cell adhesion and cell-extracellular matrix interactions in a variety of cell types. May function as a scaffolding molecule with the potential to influence both actin polymerization and the assembly of existing actin filaments into higher-order arrays. Binds to proteins that bind to either monomeric or filamentous actin. Localizes at sites where active actin remodeling takes place, such as lamellipodia and membrane ruffles. Different isoforms may have functional differences. Plays a role in neurite outgrowth and in the establishment of polarity during neuronal morphogenesis. Participates in the acquisition of the reactive astrocyte morphology. The polypeptide is Palladin (Palld) (Rattus norvegicus (Rat)).